The following is a 280-amino-acid chain: Urease accessory protein UreD (280 aa).

Belongs to the UreD family. As to quaternary structure, ureD, UreF and UreG form a complex that acts as a GTP-hydrolysis-dependent molecular chaperone, activating the urease apoprotein by helping to assemble the nickel containing metallocenter of UreC. The UreE protein probably delivers the nickel.

Its subcellular location is the cytoplasm. In terms of biological role, required for maturation of urease via the functional incorporation of the urease nickel metallocenter. This Staphylococcus saprophyticus subsp. saprophyticus (strain ATCC 15305 / DSM 20229 / NCIMB 8711 / NCTC 7292 / S-41) protein is Urease accessory protein UreD.